The chain runs to 182 residues: Chromophore lyase CpcS/CpeS (182 aa).

It belongs to the CpcS/CpeS biliprotein lyase family.

Functionally, covalently attaches a chromophore to Cys residue(s) of phycobiliproteins. The polypeptide is Chromophore lyase CpcS/CpeS (Thermosynechococcus vestitus (strain NIES-2133 / IAM M-273 / BP-1)).